Consider the following 346-residue polypeptide: Tetraacyldisaccharide 4'-kinase (346 aa).

54–61 serves as a coordination point for ATP; it reads TVGGAGKT.

It belongs to the LpxK family.

It carries out the reaction a lipid A disaccharide + ATP = a lipid IVA + ADP + H(+). It participates in glycolipid biosynthesis; lipid IV(A) biosynthesis; lipid IV(A) from (3R)-3-hydroxytetradecanoyl-[acyl-carrier-protein] and UDP-N-acetyl-alpha-D-glucosamine: step 6/6. Functionally, transfers the gamma-phosphate of ATP to the 4'-position of a tetraacyldisaccharide 1-phosphate intermediate (termed DS-1-P) to form tetraacyldisaccharide 1,4'-bis-phosphate (lipid IVA). This chain is Tetraacyldisaccharide 4'-kinase, found in Sinorhizobium fredii (strain NBRC 101917 / NGR234).